The following is a 439-amino-acid chain: Methionine aminopeptidase 2-2 (439 aa).

Residues 1–90 (MAAQTTEKLD…RVPVSNLFPN (90 aa)) are disordered. Positions 28 to 41 (EAEEDSDDAQDEGA) are enriched in acidic residues. Basic residues predominate over residues 56-72 (KKKKKKKPKKKSKKKGG). Histidine 196 contacts substrate. Positions 216, 227, and 296 each coordinate a divalent metal cation. Residue histidine 304 participates in substrate binding. Glutamate 329 and glutamate 424 together coordinate a divalent metal cation.

The protein belongs to the peptidase M24A family. Methionine aminopeptidase eukaryotic type 2 subfamily. Co(2+) serves as cofactor. It depends on Zn(2+) as a cofactor. The cofactor is Mn(2+). Fe(2+) is required as a cofactor.

The protein localises to the cytoplasm. It carries out the reaction Release of N-terminal amino acids, preferentially methionine, from peptides and arylamides.. In terms of biological role, cotranslationally removes the N-terminal methionine from nascent proteins. The N-terminal methionine is often cleaved when the second residue in the primary sequence is small and uncharged (Met-Ala-, Cys, Gly, Pro, Ser, Thr, or Val). This Penicillium rubens (strain ATCC 28089 / DSM 1075 / NRRL 1951 / Wisconsin 54-1255) (Penicillium chrysogenum) protein is Methionine aminopeptidase 2-2.